Reading from the N-terminus, the 579-residue chain is Proline--tRNA ligase (579 aa).

The protein belongs to the class-II aminoacyl-tRNA synthetase family. ProS type 1 subfamily. Homodimer.

The protein localises to the cytoplasm. The enzyme catalyses tRNA(Pro) + L-proline + ATP = L-prolyl-tRNA(Pro) + AMP + diphosphate. In terms of biological role, catalyzes the attachment of proline to tRNA(Pro) in a two-step reaction: proline is first activated by ATP to form Pro-AMP and then transferred to the acceptor end of tRNA(Pro). As ProRS can inadvertently accommodate and process non-cognate amino acids such as alanine and cysteine, to avoid such errors it has two additional distinct editing activities against alanine. One activity is designated as 'pretransfer' editing and involves the tRNA(Pro)-independent hydrolysis of activated Ala-AMP. The other activity is designated 'posttransfer' editing and involves deacylation of mischarged Ala-tRNA(Pro). The misacylated Cys-tRNA(Pro) is not edited by ProRS. In Hamiltonella defensa subsp. Acyrthosiphon pisum (strain 5AT), this protein is Proline--tRNA ligase.